A 441-amino-acid polypeptide reads, in one-letter code: Gamma-glutamyl phosphate reductase (441 aa).

This sequence belongs to the gamma-glutamyl phosphate reductase family.

It is found in the cytoplasm. The enzyme catalyses L-glutamate 5-semialdehyde + phosphate + NADP(+) = L-glutamyl 5-phosphate + NADPH + H(+). It participates in amino-acid biosynthesis; L-proline biosynthesis; L-glutamate 5-semialdehyde from L-glutamate: step 2/2. In terms of biological role, catalyzes the NADPH-dependent reduction of L-glutamate 5-phosphate into L-glutamate 5-semialdehyde and phosphate. The product spontaneously undergoes cyclization to form 1-pyrroline-5-carboxylate. The polypeptide is Gamma-glutamyl phosphate reductase (Hydrogenobaculum sp. (strain Y04AAS1)).